The following is a 217-amino-acid chain: Large ribosomal subunit protein uL4 (217 aa).

Positions 58 to 90 are disordered; that stretch reads TAATKGRSDVSGGGKKPWRQKGTGRARSGTSRS.

Belongs to the universal ribosomal protein uL4 family. As to quaternary structure, part of the 50S ribosomal subunit.

Functionally, one of the primary rRNA binding proteins, this protein initially binds near the 5'-end of the 23S rRNA. It is important during the early stages of 50S assembly. It makes multiple contacts with different domains of the 23S rRNA in the assembled 50S subunit and ribosome. Forms part of the polypeptide exit tunnel. The protein is Large ribosomal subunit protein uL4 of Syntrophus aciditrophicus (strain SB).